Here is a 146-residue protein sequence, read N- to C-terminus: D-aminoacyl-tRNA deacylase (146 aa).

A Gly-cisPro motif, important for rejection of L-amino acids motif is present at residues 137–138 (GP).

The protein belongs to the DTD family. Homodimer.

The protein resides in the cytoplasm. It catalyses the reaction glycyl-tRNA(Ala) + H2O = tRNA(Ala) + glycine + H(+). It carries out the reaction a D-aminoacyl-tRNA + H2O = a tRNA + a D-alpha-amino acid + H(+). In terms of biological role, an aminoacyl-tRNA editing enzyme that deacylates mischarged D-aminoacyl-tRNAs. Also deacylates mischarged glycyl-tRNA(Ala), protecting cells against glycine mischarging by AlaRS. Acts via tRNA-based rather than protein-based catalysis; rejects L-amino acids rather than detecting D-amino acids in the active site. By recycling D-aminoacyl-tRNA to D-amino acids and free tRNA molecules, this enzyme counteracts the toxicity associated with the formation of D-aminoacyl-tRNA entities in vivo and helps enforce protein L-homochirality. This is D-aminoacyl-tRNA deacylase from Psychrobacter sp. (strain PRwf-1).